A 167-amino-acid chain; its full sequence is Probable chorismate pyruvate-lyase (167 aa).

Residues Arg71, Ile110, and Glu150 each coordinate substrate.

Belongs to the UbiC family.

It is found in the cytoplasm. The enzyme catalyses chorismate = 4-hydroxybenzoate + pyruvate. Its pathway is cofactor biosynthesis; ubiquinone biosynthesis. Functionally, removes the pyruvyl group from chorismate, with concomitant aromatization of the ring, to provide 4-hydroxybenzoate (4HB) for the ubiquinone pathway. This Acinetobacter baylyi (strain ATCC 33305 / BD413 / ADP1) protein is Probable chorismate pyruvate-lyase.